We begin with the raw amino-acid sequence, 201 residues long: MTTAPTIGVFALQGDVREHLGMLTGLGVEAIAVRRPAELDVCAGLVIPGGESTTMAKLARTFDLFEPIRQRIKEGMPAFGTCAGMIMLADRIEDGTRDQETLGGLDITVRRNAFGRQVESFEGEIDVVGLDAPLHAVFIRAPWVEAVGDSVEVLARVEQGEAAGRIVAVRQGSLMATSFHPEVGGDSRVHRLFVDLVTEER.

50–52 (GES) contributes to the L-glutamine binding site. The active-site Nucleophile is Cys82. Residues Arg111 and 139–140 (IR) each bind L-glutamine. Active-site charge relay system residues include His180 and Glu182.

The protein belongs to the glutaminase PdxT/SNO family. In terms of assembly, in the presence of PdxS, forms a dodecamer of heterodimers. Only shows activity in the heterodimer.

The catalysed reaction is aldehydo-D-ribose 5-phosphate + D-glyceraldehyde 3-phosphate + L-glutamine = pyridoxal 5'-phosphate + L-glutamate + phosphate + 3 H2O + H(+). The enzyme catalyses L-glutamine + H2O = L-glutamate + NH4(+). It functions in the pathway cofactor biosynthesis; pyridoxal 5'-phosphate biosynthesis. Its function is as follows. Catalyzes the hydrolysis of glutamine to glutamate and ammonia as part of the biosynthesis of pyridoxal 5'-phosphate. The resulting ammonia molecule is channeled to the active site of PdxS. This is Pyridoxal 5'-phosphate synthase subunit PdxT from Nocardioides sp. (strain ATCC BAA-499 / JS614).